Consider the following 514-residue polypeptide: ATP synthase subunit alpha (514 aa).

170 to 177 contacts ATP; the sequence is GDRQIGKT.

It belongs to the ATPase alpha/beta chains family. In terms of assembly, F-type ATPases have 2 components, CF(1) - the catalytic core - and CF(0) - the membrane proton channel. CF(1) has five subunits: alpha(3), beta(3), gamma(1), delta(1), epsilon(1). CF(0) has three main subunits: a(1), b(2) and c(9-12). The alpha and beta chains form an alternating ring which encloses part of the gamma chain. CF(1) is attached to CF(0) by a central stalk formed by the gamma and epsilon chains, while a peripheral stalk is formed by the delta and b chains.

The protein localises to the cell inner membrane. The catalysed reaction is ATP + H2O + 4 H(+)(in) = ADP + phosphate + 5 H(+)(out). Its function is as follows. Produces ATP from ADP in the presence of a proton gradient across the membrane. The alpha chain is a regulatory subunit. The protein is ATP synthase subunit alpha of Ectopseudomonas mendocina (strain ymp) (Pseudomonas mendocina).